The sequence spans 324 residues: Carbonic anhydrase, chloroplastic (324 aa).

The protein belongs to the beta-class carbonic anhydrase family. In terms of assembly, homohexamer.

It is found in the plastid. It localises to the chloroplast stroma. It catalyses the reaction hydrogencarbonate + H(+) = CO2 + H2O. Functionally, reversible hydration of carbon dioxide. This Hordeum vulgare (Barley) protein is Carbonic anhydrase, chloroplastic.